The sequence spans 185 residues: MKSASTVVATRILGLDPGLRITGFGVIDKLGNQLRYVASGCIRTRDGELPGRLKTLLDGVREVVAAYTPDQVAVEKVFVNVNPQSTLLLGQARGAVICGAVSCDLPVHEYTALQVKQAVVGYGKAAKEQVQHMVQRLLALDGCPSPDAADALACAICHAHGGQGTAGAFAGRRRAGRILVAPDPG.

Active-site residues include D16, E75, and D147. Positions 16, 75, and 147 each coordinate Mg(2+).

Belongs to the RuvC family. As to quaternary structure, homodimer which binds Holliday junction (HJ) DNA. The HJ becomes 2-fold symmetrical on binding to RuvC with unstacked arms; it has a different conformation from HJ DNA in complex with RuvA. In the full resolvosome a probable DNA-RuvA(4)-RuvB(12)-RuvC(2) complex forms which resolves the HJ. The cofactor is Mg(2+).

Its subcellular location is the cytoplasm. It carries out the reaction Endonucleolytic cleavage at a junction such as a reciprocal single-stranded crossover between two homologous DNA duplexes (Holliday junction).. Functionally, the RuvA-RuvB-RuvC complex processes Holliday junction (HJ) DNA during genetic recombination and DNA repair. Endonuclease that resolves HJ intermediates. Cleaves cruciform DNA by making single-stranded nicks across the HJ at symmetrical positions within the homologous arms, yielding a 5'-phosphate and a 3'-hydroxyl group; requires a central core of homology in the junction. The consensus cleavage sequence is 5'-(A/T)TT(C/G)-3'. Cleavage occurs on the 3'-side of the TT dinucleotide at the point of strand exchange. HJ branch migration catalyzed by RuvA-RuvB allows RuvC to scan DNA until it finds its consensus sequence, where it cleaves and resolves the cruciform DNA. This chain is Crossover junction endodeoxyribonuclease RuvC, found in Aromatoleum aromaticum (strain DSM 19018 / LMG 30748 / EbN1) (Azoarcus sp. (strain EbN1)).